The primary structure comprises 150 residues: Putative F-box protein At2g33655 (150 aa).

Residues 1-47 enclose the F-box domain; sequence MEKMSDLPRELVEEILSRVPVKSMREVRVTCKTWNALSKHISKAEAA.

The protein is Putative F-box protein At2g33655 of Arabidopsis thaliana (Mouse-ear cress).